The following is a 438-amino-acid chain: Choline monooxygenase, chloroplastic (438 aa).

The transit peptide at 1–58 (MAASATTMLLKYPTTVCGIPNSSANNSTDPSNNIVQIPQTTTTNSPLLKFRTPNKPVN) directs the protein to the chloroplast. The 108-residue stretch at 121-228 (WQVAGYSDQV…VAVWGPFILI (108 aa)) folds into the Rieske domain. Positions 163, 165, 182, and 185 each coordinate [2Fe-2S] cluster. Fe cation-binding residues include histidine 288 and histidine 293.

This sequence belongs to the choline monooxygenase family. [2Fe-2S] cluster serves as cofactor. It depends on Fe cation as a cofactor. The cofactor is Mg(2+). As to expression, expressed in roots and leaves.

The protein resides in the plastid. The protein localises to the chloroplast stroma. It carries out the reaction choline + 2 reduced [2Fe-2S]-[ferredoxin] + O2 + 2 H(+) = betaine aldehyde hydrate + 2 oxidized [2Fe-2S]-[ferredoxin] + H2O. The protein operates within amine and polyamine biosynthesis; betaine biosynthesis via choline pathway; betaine aldehyde from choline (monooxygenase route): step 1/1. Functionally, catalyzes the first step of the osmoprotectant glycine betaine synthesis. This is Choline monooxygenase, chloroplastic (CMO) from Atriplex hortensis (Mountain spinach).